The following is a 174-amino-acid chain: RNA pyrophosphohydrolase (174 aa).

A Nudix hydrolase domain is found at 6–149 (GFRANVGIII…KRDVYRKVMK (144 aa)). The short motif at 38–59 (GGVDDGETAEEAMYRELYEEVG) is the Nudix box element.

Belongs to the Nudix hydrolase family. RppH subfamily. It depends on a divalent metal cation as a cofactor.

Functionally, accelerates the degradation of transcripts by removing pyrophosphate from the 5'-end of triphosphorylated RNA, leading to a more labile monophosphorylated state that can stimulate subsequent ribonuclease cleavage. The protein is RNA pyrophosphohydrolase of Shewanella baltica (strain OS223).